A 200-amino-acid chain; its full sequence is MDITINGHTLQYVIEHEKTIGEVLGAIEAACKKEKQTVSAVTVNGRELSANELDTLFCQSLDTDVTLNLTTLSGGDVRALLREISTTLLARTAALQEIAVNMHSGNLAESYAMVSDFSALLKSLYHCFTLSDIADLDHGLRIKGKALHDYQREISPLLKGLLEAMEEGDSVAVGDIAEYELAPVVRDLSDGILHMDMGVQ.

This is an uncharacterized protein from Treponema pallidum (strain Nichols).